A 110-amino-acid chain; its full sequence is Snake venom vascular endothelial growth factor toxin ICPP (110 aa).

Gln1 bears the Pyrrolidone carboxylic acid mark. 3 cysteine pairs are disulfide-bonded: Cys14–Cys56, Cys45–Cys91, and Cys49–Cys93.

In terms of assembly, homodimer; disulfide-linked. Interacts with high affinity with KDR/VEGFR-2, and with a lower affinity with neuropilin-1 (NRP1) and neuropilin-2 (NRP2). In terms of tissue distribution, expressed by the venom gland.

It is found in the secreted. In terms of biological role, snake venom VEGFs may contribute to venom dispersion and prey subjugation by inducing vascular permeability and hypotension. This protein increases vascular permeability and angiogenesis probably through VEGF receptor (KDR/VEGFR-2) signaling. Induces DNA synthesis in human umbilical vein endothelial cells, and promotes mouse embryonic stem cell proliferation and differentiation. It may also induce a drastic hypotensive effect after intravenous injection. The hypotension is mediated by nitric oxide (NO), which is produced by VEGF-activated endothelium NO synthase. This is Snake venom vascular endothelial growth factor toxin ICPP from Macrovipera lebetinus (Levantine viper).